We begin with the raw amino-acid sequence, 376 residues long: Homeobox protein extradenticle (376 aa).

The tract at residues 1–37 (MEDPNRMLAHTGGMMAPQGYGLSGQDDGQNAGSENEV) is disordered. Residues 38–237 (RKQKDIGEIL…VMILRSRFLD (200 aa)) form the PBC domain. Positions 45–124 (EILQQIMSIS…EGVAGPEKGG (80 aa)) are PBC-A. The interval 127–237 (AAAASAAAAS…VMILRSRFLD (111 aa)) is PBC-B. The segment at residues 238 to 300 (ARRKRRNFSK…NKRIRYKKNI (63 aa)) is a DNA-binding region (homeobox; TALE-type). Residues 318–335 (ASPYSMAGPPSGTTTPMM) are compositionally biased toward low complexity. The segment at 318-376 (ASPYSMAGPPSGTTTPMMSPAPPQDSMGYPMGSGGYDQQQPYDNSMGGYDPNLHQDLSP) is disordered.

Belongs to the TALE/PBX homeobox family. Interacts with Ubx and hth. As to expression, prior to full germband retraction it is ubiquitously present, after germband retraction, mostly present in the anterior portion of the ventral nerve cord.

Its subcellular location is the nucleus. Its function is as follows. Transcription factor which acts with the selector homeodomain proteins altering the regulation of downstream target genes such as wingless (wg), teashirt (tsh) and decapentaplegic (dpp), thus affecting segmental identity. Delimits the eye field and prevent inappropriate eye development. Required for proper localization of chordotonal organs within the peripheral nervous system. The sequence is that of Homeobox protein extradenticle (exd) from Drosophila melanogaster (Fruit fly).